We begin with the raw amino-acid sequence, 98 residues long: Aspartyl/glutamyl-tRNA(Asn/Gln) amidotransferase subunit C (98 aa).

Belongs to the GatC family. As to quaternary structure, heterotrimer of A, B and C subunits.

The catalysed reaction is L-glutamyl-tRNA(Gln) + L-glutamine + ATP + H2O = L-glutaminyl-tRNA(Gln) + L-glutamate + ADP + phosphate + H(+). It catalyses the reaction L-aspartyl-tRNA(Asn) + L-glutamine + ATP + H2O = L-asparaginyl-tRNA(Asn) + L-glutamate + ADP + phosphate + 2 H(+). Functionally, allows the formation of correctly charged Asn-tRNA(Asn) or Gln-tRNA(Gln) through the transamidation of misacylated Asp-tRNA(Asn) or Glu-tRNA(Gln) in organisms which lack either or both of asparaginyl-tRNA or glutaminyl-tRNA synthetases. The reaction takes place in the presence of glutamine and ATP through an activated phospho-Asp-tRNA(Asn) or phospho-Glu-tRNA(Gln). In Bifidobacterium adolescentis (strain ATCC 15703 / DSM 20083 / NCTC 11814 / E194a), this protein is Aspartyl/glutamyl-tRNA(Asn/Gln) amidotransferase subunit C.